We begin with the raw amino-acid sequence, 138 residues long: MLQPKRRKYRKEQKGRNTGKATRGNAVSFGEFGLKAIGRGRLTARQIEAARRAMTRHIKRGGRIWIRIFPDKPISQKPAEVRMGNGKGNPEYYVAEIQPGKMLYEMDGVTEELAREAFRLAAAKLPLKTAFIVRQLGA.

The segment covering 1–13 (MLQPKRRKYRKEQ) has biased composition (basic residues). The interval 1–24 (MLQPKRRKYRKEQKGRNTGKATRG) is disordered.

The protein belongs to the universal ribosomal protein uL16 family. As to quaternary structure, part of the 50S ribosomal subunit.

Its function is as follows. Binds 23S rRNA and is also seen to make contacts with the A and possibly P site tRNAs. In Burkholderia lata (strain ATCC 17760 / DSM 23089 / LMG 22485 / NCIMB 9086 / R18194 / 383), this protein is Large ribosomal subunit protein uL16.